Here is a 555-residue protein sequence, read N- to C-terminus: Formate--tetrahydrofolate ligase (555 aa).

65-72 (TPAGEGKS) is an ATP binding site.

This sequence belongs to the formate--tetrahydrofolate ligase family.

It carries out the reaction (6S)-5,6,7,8-tetrahydrofolate + formate + ATP = (6R)-10-formyltetrahydrofolate + ADP + phosphate. Its pathway is one-carbon metabolism; tetrahydrofolate interconversion. This chain is Formate--tetrahydrofolate ligase, found in Staphylococcus aureus (strain bovine RF122 / ET3-1).